Consider the following 1161-residue polypeptide: DNA-directed RNA polymerase subunit beta (1161 aa).

This sequence belongs to the RNA polymerase beta chain family. As to quaternary structure, the RNAP catalytic core consists of 2 alpha, 1 beta, 1 beta' and 1 omega subunit. When a sigma factor is associated with the core the holoenzyme is formed, which can initiate transcription. The RNAP complex including the principal sigma factor HrdB also interacts with RNA-binding protein RbpA.

The enzyme catalyses RNA(n) + a ribonucleoside 5'-triphosphate = RNA(n+1) + diphosphate. In terms of biological role, DNA-dependent RNA polymerase catalyzes the transcription of DNA into RNA using the four ribonucleoside triphosphates as substrates. The protein is DNA-directed RNA polymerase subunit beta of Streptomyces coelicolor (strain ATCC BAA-471 / A3(2) / M145).